We begin with the raw amino-acid sequence, 171 residues long: Transcription antitermination protein NusB (171 aa).

It belongs to the NusB family.

In terms of biological role, involved in transcription antitermination. Required for transcription of ribosomal RNA (rRNA) genes. Binds specifically to the boxA antiterminator sequence of the ribosomal RNA (rrn) operons. This Pelodictyon phaeoclathratiforme (strain DSM 5477 / BU-1) protein is Transcription antitermination protein NusB.